A 234-amino-acid polypeptide reads, in one-letter code: Small ribosomal subunit protein uS2 (234 aa).

This sequence belongs to the universal ribosomal protein uS2 family.

The sequence is that of Small ribosomal subunit protein uS2 from Clostridium kluyveri (strain NBRC 12016).